The sequence spans 25 residues: Dermaseptin-5.1TR (25 aa).

A Valine amide modification is found at Val-25.

Expressed by the skin glands.

It is found in the secreted. Has antimicrobial activity. The chain is Dermaseptin-5.1TR from Phyllomedusa trinitatis (Trinidad leaf frog).